Reading from the N-terminus, the 256-residue chain is Non-structural protein 1 (256 aa).

It is found in the host cytoplasm. The protein localises to the host perinuclear region. In terms of biological role, plays a role in inhibition of the host innate immune system by counteracting the type I interferon signaling. The protein is Non-structural protein 1 of Infectious salmon anemia virus (isolate Atlantic salmon/Norway/810/9/99) (ISAV).